Reading from the N-terminus, the 231-residue chain is Large ribosomal subunit protein uL1 (231 aa).

Belongs to the universal ribosomal protein uL1 family. In terms of assembly, part of the 50S ribosomal subunit.

Binds directly to 23S rRNA. The L1 stalk is quite mobile in the ribosome, and is involved in E site tRNA release. In terms of biological role, protein L1 is also a translational repressor protein, it controls the translation of the L11 operon by binding to its mRNA. In Alkalilimnicola ehrlichii (strain ATCC BAA-1101 / DSM 17681 / MLHE-1), this protein is Large ribosomal subunit protein uL1.